The following is a 376-amino-acid chain: Succinyl-diaminopimelate desuccinylase (376 aa).

Histidine 68 is a binding site for Zn(2+). Aspartate 70 is a catalytic residue. Aspartate 101 contributes to the Zn(2+) binding site. The Proton acceptor role is filled by glutamate 135. Zn(2+) contacts are provided by glutamate 136, glutamate 164, and histidine 349.

Belongs to the peptidase M20A family. DapE subfamily. As to quaternary structure, homodimer. Requires Zn(2+) as cofactor. Co(2+) serves as cofactor.

It catalyses the reaction N-succinyl-(2S,6S)-2,6-diaminopimelate + H2O = (2S,6S)-2,6-diaminopimelate + succinate. It participates in amino-acid biosynthesis; L-lysine biosynthesis via DAP pathway; LL-2,6-diaminopimelate from (S)-tetrahydrodipicolinate (succinylase route): step 3/3. Functionally, catalyzes the hydrolysis of N-succinyl-L,L-diaminopimelic acid (SDAP), forming succinate and LL-2,6-diaminopimelate (DAP), an intermediate involved in the bacterial biosynthesis of lysine and meso-diaminopimelic acid, an essential component of bacterial cell walls. The chain is Succinyl-diaminopimelate desuccinylase from Marinobacter nauticus (strain ATCC 700491 / DSM 11845 / VT8) (Marinobacter aquaeolei).